A 346-amino-acid chain; its full sequence is Methylthioribose-1-phosphate isomerase (346 aa).

Substrate-binding positions include 46–48, arginine 89, and glutamine 196; that span reads RGA. Aspartate 237 acts as the Proton donor in catalysis. Substrate is bound at residue 247 to 248; sequence NK.

This sequence belongs to the eIF-2B alpha/beta/delta subunits family. MtnA subfamily.

The catalysed reaction is 5-(methylsulfanyl)-alpha-D-ribose 1-phosphate = 5-(methylsulfanyl)-D-ribulose 1-phosphate. Its pathway is amino-acid biosynthesis; L-methionine biosynthesis via salvage pathway; L-methionine from S-methyl-5-thio-alpha-D-ribose 1-phosphate: step 1/6. Functionally, catalyzes the interconversion of methylthioribose-1-phosphate (MTR-1-P) into methylthioribulose-1-phosphate (MTRu-1-P). This Citrifermentans bemidjiense (strain ATCC BAA-1014 / DSM 16622 / JCM 12645 / Bem) (Geobacter bemidjiensis) protein is Methylthioribose-1-phosphate isomerase.